A 215-amino-acid chain; its full sequence is MNGDKKQVTDIVETLKKGPLDPNVEVVIGVPAIYLAYVQSIVPGTISVAAQNCWKVAKGAFTGEISPAMIKDIGANWVILGHSERRTIFGEKDDLVAEKVAHALENGLKVIACIGETLEEREAGKTEEVVFRQTKALLPAIGNNWANVVLAYEPVWAIGTGKTASPQQAQDVHASLRNWLSSNASPDVAASVRIQYGGSVTAANAKELSAFPDID.

The active-site Electrophile is the His-82. Glu-153 acts as the Proton acceptor in catalysis.

The protein belongs to the triosephosphate isomerase family. As to quaternary structure, homodimer.

It carries out the reaction D-glyceraldehyde 3-phosphate = dihydroxyacetone phosphate. The protein operates within carbohydrate biosynthesis; gluconeogenesis. It participates in carbohydrate degradation; glycolysis; D-glyceraldehyde 3-phosphate from glycerone phosphate: step 1/1. The chain is Triosephosphate isomerase (Tpi) from Heliothis virescens (Tobacco budworm moth).